The sequence spans 490 residues: Betaine aldehyde dehydrogenase (490 aa).

K(+) is bound by residues isoleucine 27 and aspartate 93. 150 to 152 (GAW) serves as a coordination point for NAD(+). The active-site Charge relay system is the lysine 162. 176–179 (KPSE) contributes to the NAD(+) binding site. Valine 180 contributes to the K(+) binding site. 230–233 (GTTT) serves as a coordination point for NAD(+). K(+) is bound at residue leucine 246. Catalysis depends on glutamate 252, which acts as the Proton acceptor. Residues glycine 254, cysteine 286, and glutamate 387 each contribute to the NAD(+) site. The active-site Nucleophile is the cysteine 286. Position 286 is a cysteine sulfenic acid (-SOH) (cysteine 286). K(+) contacts are provided by lysine 457 and glycine 460. Catalysis depends on glutamate 464, which acts as the Charge relay system.

It belongs to the aldehyde dehydrogenase family. Dimer of dimers. K(+) serves as cofactor.

It carries out the reaction betaine aldehyde + NAD(+) + H2O = glycine betaine + NADH + 2 H(+). The protein operates within amine and polyamine biosynthesis; betaine biosynthesis via choline pathway; betaine from betaine aldehyde: step 1/1. Its function is as follows. Involved in the biosynthesis of the osmoprotectant glycine betaine. Catalyzes the irreversible oxidation of betaine aldehyde to the corresponding acid. This is Betaine aldehyde dehydrogenase from Pseudomonas putida (strain GB-1).